We begin with the raw amino-acid sequence, 537 residues long: Leucine-rich repeat LGI family member 4 (537 aa).

The first 19 residues, 1 to 19, serve as a signal peptide directing secretion; that stretch reads MGGAGILLFLLAWAGAGVA. LRR repeat units lie at residues 53-74, 77-98, 101-122, and 125-146; these read TLLS…SFLK, SLHL…AFIG, YLQY…ALRG, and SLTH…LFRG. The LRRCT domain maps to 158–208; it reads NPFQCDCRVLWLLQWMPTVNASVGTGACAGPPAVAQIQLNHLDPKKFKCRA. N-linked (GlcNAc...) asparagine glycosylation is present at N177. 7 EAR repeats span residues 210-252, 256-298, 302-349, 351-394, 396-439, 441-483, and 487-532; these read ELSW…VWDY, RFRP…SRSS, RLTP…CRDG, GFYP…HWVG, RFER…RWDG, MFRL…RFES, and ILEP…QHHE.

In terms of assembly, can bind to ADAM11, ADAM22 and ADAM23. Brain. Expressed in the entire developing peripheral nerves. Strongly expressed in the trigeminal nerve and ganglion and particularly abundant in the boundary cap cells - a transient population of cells that contributes to the Schwann cell population of the dorsal root nerve.

Its subcellular location is the secreted. Component of Schwann cell signaling pathway(s) that controls axon segregation and myelin formation. The protein is Leucine-rich repeat LGI family member 4 (Lgi4) of Mus musculus (Mouse).